The following is a 799-amino-acid chain: Elongation factor G, mitochondrial (799 aa).

Residues 1-33 constitute a mitochondrion transit peptide; it reads MRSPSLARLQTRAVFGLTRSARFQPQTLLRQRC. Residues 97–384 form the tr-type G domain; sequence DKCRNIGIAA…GVIDYLPNPA (288 aa). GTP contacts are provided by residues 106 to 113, 182 to 186, and 236 to 239; these read AHIDSGKT, DTPGH, and NKMD.

The protein belongs to the TRAFAC class translation factor GTPase superfamily. Classic translation factor GTPase family. EF-G/EF-2 subfamily.

It localises to the mitochondrion. Its pathway is protein biosynthesis; polypeptide chain elongation. Functionally, mitochondrial GTPase that catalyzes the GTP-dependent ribosomal translocation step during translation elongation. During this step, the ribosome changes from the pre-translocational (PRE) to the post-translocational (POST) state as the newly formed A-site-bound peptidyl-tRNA and P-site-bound deacylated tRNA move to the P and E sites, respectively. Catalyzes the coordinated movement of the two tRNA molecules, the mRNA and conformational changes in the ribosome. In Penicillium rubens (strain ATCC 28089 / DSM 1075 / NRRL 1951 / Wisconsin 54-1255) (Penicillium chrysogenum), this protein is Elongation factor G, mitochondrial (mef1).